The primary structure comprises 273 residues: Inactive endochitinase At2g43600 (273 aa).

Residues 1–22 (MTIKNVIFSLFILAILAETVFS) form the signal peptide. The Chitin-binding type-1 domain maps to 23 to 61 (QNCMDTSCPGLKECCSRWGFCGTKDEYCGFFCFSGPCNI). Disulfide bonds link Cys25-Cys37, Cys30-Cys43, Cys36-Cys50, and Cys54-Cys59. Residues 78 to 273 (GKIETVITSA…GVTPDQGLDC (196 aa)) are catalytic. N-linked (GlcNAc...) asparagine glycosylation occurs at Asn99.

It belongs to the glycosyl hydrolase 19 family. Chitinase class I subfamily.

The polypeptide is Inactive endochitinase At2g43600 (Arabidopsis thaliana (Mouse-ear cress)).